Here is a 368-residue protein sequence, read N- to C-terminus: Homoserine O-acetyltransferase (368 aa).

Residues 47–349 (NAILICHALS…SGEGHDSFLL (303 aa)) form the AB hydrolase-1 domain. Residue Ser-153 is the Nucleophile of the active site. Arg-221 serves as a coordination point for substrate. Catalysis depends on residues Asp-311 and His-344. Position 345 (Asp-345) interacts with substrate.

Belongs to the AB hydrolase superfamily. MetX family. Homodimer.

It is found in the cytoplasm. It carries out the reaction L-homoserine + acetyl-CoA = O-acetyl-L-homoserine + CoA. The protein operates within amino-acid biosynthesis; L-methionine biosynthesis via de novo pathway; O-acetyl-L-homoserine from L-homoserine: step 1/1. Functionally, transfers an acetyl group from acetyl-CoA to L-homoserine, forming acetyl-L-homoserine. This is Homoserine O-acetyltransferase from Leptospira borgpetersenii serovar Hardjo-bovis (strain JB197).